We begin with the raw amino-acid sequence, 537 residues long: Probable quinate permease (537 aa).

Topologically, residues 1-22 (MSILSLVEDRPTPKEVYNWKIY) are cytoplasmic. A helical transmembrane segment spans residues 23–43 (LLAAVASCTSCMIGYDSAFIG). Residues 44 to 74 (TTISLQSFKDEFDWDSMSAAHQDLVSSNIVS) are Extracellular-facing. A helical transmembrane segment spans residues 75 to 95 (LYQAGAFFGAFFAYPIGHFWG). Residues 96 to 97 (RK) lie on the Cytoplasmic side of the membrane. The chain crosses the membrane as a helical span at residues 98–118 (WGLMVSALIFTLGAGIMLGTN). Residues 119 to 130 (GDRGFGLLYGGR) are Extracellular-facing. Residues 131–151 (VLAGLGVGAGSNITPIYISEL) form a helical membrane-spanning segment. Over 152–159 (SPPAIRGR) the chain is Cytoplasmic. Residues 160–180 (LVGVYELGWQIGGLVGFWICY) traverse the membrane as a helical segment. At 181–193 (GVDETLPPSHKQW) the chain is on the extracellular side. Residues 194–214 (IIPFAVQLIPSGLLIIGALFL) traverse the membrane as a helical segment. The Cytoplasmic portion of the chain corresponds to 215 to 285 (KESPRWLFLR…AWTNKKILYR (71 aa)). A helical transmembrane segment spans residues 286-306 (LFLGSMLFFWQNGSGINAINY). Residues 307–325 (YSPTVFKSIGVTGSNTSLF) are Extracellular-facing. Residues 326–346 (TTGIFGVVKTVVTFIWLLWLI) traverse the membrane as a helical segment. Topologically, residues 347 to 352 (DRVGRR) are cytoplasmic. Residues 353-373 (LLLLIGAAGGSICLWIVGAYI) form a helical membrane-spanning segment. Topologically, residues 374-387 (KIARPSERENKQMD) are extracellular. The helical transmembrane segment at 388–408 (GGGIAAMFFFYLWTVFYTPSW) threads the bilayer. The Cytoplasmic segment spans residues 409–456 (NGTPWVINSEMFDPNIRSLAQACAAGSNWLWNFLISRFTPQMFAKMDY). A helical transmembrane segment spans residues 457–477 (GVYFFFASLMILSIIFVFFLI). The Extracellular portion of the chain corresponds to 478 to 537 (PETKGIPLESMDRLFETQPIWRAHGTLLKQIREDEERFRHDLEDSGFVKSTDRQVEVVDA).

The protein belongs to the major facilitator superfamily. Sugar transporter (TC 2.A.1.1) family. Interacts with creB. In terms of processing, ubiquitinated. Deubiquitinated by creB, probably to control its activity or amount.

It localises to the cell membrane. Its function is as follows. Integral membrane transporter that imports quinic acid to be catabolized as a carbon source. In Aspergillus flavus (strain ATCC 200026 / FGSC A1120 / IAM 13836 / NRRL 3357 / JCM 12722 / SRRC 167), this protein is Probable quinate permease (qutD).